The following is a 1493-amino-acid chain: MPNEGIPHSSQTQEQDCLQSQPVSNNEEMAIKQESGGDGEVEEYLSFRSVGDGLSTSAVGCASAAPRRGPALLHIDRHQIQAVEPSAQALELQGLGVDVYDQDVLEQGVLQQVDNAIHEASRASQLVDVEKEYRSVLDDLTSCTTSLRQINKIIEQLSPQAATSRDINRKLDSVKRQKYNKEQQLKKITAKQKHLQAILGGAEVKIELDHASLEEDAEPGPSSLGSMLMPVQETAWEELIRTGQMTPFGTQIPQKQEKKPRKIMLNEASGFEKYLADQAKLSFERKKQGCNKRAARKAPAPVTPPAPVQNKNKPNKKARVLSKKEERLKKHIKKLQKRALQFQGKVGLPKARRPWESDMRPEAEGDSEGEESEYFPTEEEEEEEDDEVEGAEADLSGDGTDYELKPLPKGGKRQKKVPVQEIDDDFFPSSGEEAEAASVGEGGGGGRKVGRYRDDGDEDYYKQRLRRWNKLRLQDKEKRLKLEDDSEESDAEFDEGFKVPGFLFKKLFKYQQTGVRWLWELHCQQAGGILGDEMGLGKTIQIIAFLAGLSYSKIRTRGSNYRFEGLGPTVIVCPTTVMHQWVKEFHTWWPPFRVAILHETGSYTHKKEKLIRDVAHCHGILITSYSYIRLMQDDISRYDWHYVILDEGHKIRNPNAAVTLACKQFRTPHRIILSGSPMQNNLRELWSLFDFIFPGKLGTLPVFMEQFSVPITMGGYSNASPVQVKTAYKCACVLRDTINPYLLRRMKSDVKMSLSLPDKNEQVLFCRLTDEQHKVYQNFVDSKEVYRILNGEMQIFSGLIALRKICNHPDLFSGGPKNLKGLPDDELEEDQFGYWKRSGKMIVVESLLKIWHKQGQRVLLFSQSRQMLDILEVFLRAQKYTYLKMDGTTTIASRQPLITRYNEDTSIFVFLLTTRVGGLGVNLTGANRVVIYDPDWNPSTDTQARERAWRIGQKKQVTVYRLLTAGTIEEKIYHRQIFKQFLTNRVLKDPKQRRFFKSNDLYELFTLTSPDASQSTETSAIFAGTGSDVQTPKCHLKRRIQPAFGADHDVPKRKKFPASNISVNDATSSEEKSEAKGAEVNAVTSNRSDPLKDDPHMSSNVTSNDRLGEETNAVSGPEELSVISGNGECSNSSGTGKTSMPSGDESIDEKLGLSYKRERPSQAQTEAFWENKQMENNFYKHKSKTKHHSVAEEETLEKHLRPKQKPKNSKHCRDAKFEGTRIPHLVKKRRYQKQDSENKSEAKEQSNDDYVLEKLFKKSVGVHSVMKHDAIMDGASPDYVLVEAEANRVAQDALKALRLSRQRCLGAVSGVPTWTGHRGISGAPAGKKSRFGKKRNSNFSVQHPSSTSPTEKCQDGIMKKEGKDNVPEHFSGRAEDADSSSGPLASSSLLAKMRARNHLILPERLESESGHLQEASALLPTTEHDDLLVEMRNFIAFQAHTDGQASTREILQEFESKLSASQSCVFRELLRNLCTFHRTSGGEGIWKLKPEYC.

Residues 1–39 (MPNEGIPHSSQTQEQDCLQSQPVSNNEEMAIKQESGGDG) are disordered. Positions 1–510 (MPNEGIPHSS…GFLFKKLFKY (510 aa)) are N-terminal domain; essential for its chromatin remodeling activity. Residues 8 to 27 (HSSQTQEQDCLQSQPVSNNE) are compositionally biased toward polar residues. Ser-10 bears the Phosphoserine; by ATM mark. Residue Ser-158 is modified to Phosphoserine; by CDK2. Lys-170 is subject to N6-methylated lysine; by EHMT2. Lys-205 is covalently cross-linked (Glycyl lysine isopeptide (Lys-Gly) (interchain with G-Cter in SUMO3)). Lys-255 participates in a covalent cross-link: Glycyl lysine isopeptide (Lys-Gly) (interchain with G-Cter in SUMO2). Disordered regions lie at residues 287–323 (KQGC…VLSK) and 344–453 (GKVG…GRYR). An N6-methylated lysine; by EHMT2 modification is found at Lys-297. Basic and acidic residues predominate over residues 353–363 (RPWESDMRPEA). Acidic residues predominate over residues 364–392 (EGDSEGEESEYFPTEEEEEEEDDEVEGAE). Ser-429 and Ser-430 each carry phosphoserine. Lys-448 is modified (N6-methylated lysine; by EHMT2). 2 positions are modified to phosphoserine: Ser-486 and Ser-489. The Helicase ATP-binding domain occupies 519 to 695 (WELHCQQAGG…WSLFDFIFPG (177 aa)). Position 532-539 (532-539 (DEMGLGKT)) interacts with ATP. A DEAH box motif is present at residues 646 to 649 (DEGH). Positions 843 to 1002 (VVESLLKIWH…RRFFKSNDLY (160 aa)) constitute a Helicase C-terminal domain. Disordered stretches follow at residues 1042–1147 (PAFG…DESI), 1181–1247 (HKSK…EQSN), and 1318–1384 (RGIS…SGPL). Lys-1054 bears the N6-methylated lysine; by EHMT2 mark. Residues 1123–1141 (ISGNGECSNSSGTGKTSMP) show a composition bias toward polar residues. Ser-1142 is subject to Phosphoserine. Over residues 1200-1210 (LRPKQKPKNSK) the composition is skewed to basic residues. 2 stretches are compositionally biased toward basic and acidic residues: residues 1211-1221 (HCRDAKFEGTR) and 1232-1247 (QKQD…EQSN). Positions 1327–1336 (KKSRFGKKRN) are enriched in basic residues. A compositionally biased stretch (polar residues) spans 1337 to 1351 (SNFSVQHPSSTSPTE). A Phosphoserine modification is found at Ser-1348. Residues 1352-1376 (KCQDGIMKKEGKDNVPEHFSGRAED) show a composition bias toward basic and acidic residues. Residues 1386–1398 (SSSLLAKMRARNH) carry the CSA-interacting motif (CIM) motif. The tract at residues 1400–1428 (ILPERLESESGHLQEASALLPTTEHDDLL) is ubiquitin-binding domain (UBD). The tract at residues 1429 to 1493 (VEMRNFIAFQ…GIWKLKPEYC (65 aa)) is winged-helix domain (WHD). Positions 1446–1493 (STREILQEFESKLSASQSCVFRELLRNLCTFHRTSGGEGIWKLKPEYC) are essential for its interaction with RNA polymerase II, transcription-coupled nucleotide excision repair activity, association with chromatin after UV irradiation and for mediating the UV-induced translocation of ERRC8 to the nuclear matrix.

It belongs to the SNF2/RAD54 helicase family. As to quaternary structure, homodimer. Binds DNA. Interacts with ERCC8. Interacts with RNA polymerase II; interaction is enhanced by UV irradiation. Component of the B-WICH complex, at least composed of SMARCA5/SNF2H, BAZ1B/WSTF, SF3B1, DEK, MYO1C, ERCC6, MYBBP1A and DDX21. Interacts with KIAA1530/UVSSA. Interacts with ELOA and CUL5; the interaction is induced by DNA damaging agents or by inhibitors of RNA polymerase II elongation. Interacts (via WHD region) with RIF1. Interacts with SMARCC2/BAF170, SMARCB1/BAF47 and the neuron-specific chromatin remodeling complex (nBAF complex). Interacts with ERCC5/XPG (via C-terminus); the interaction stimulates ERCC6/CSB binding to the DNA repair bubble and ERCC6/CSB ATPase activity. May form a complex composed of RNA polymerase II, ERCC6/CSB and ERCC5/XPG which associates with the DNA repair bubble during transcription-coupled nucleotide excision repair. Interacts with CAND1, CSTF1, DDX3X, DDX5, DDX17, DDX23, DHX36, HDAC1, HNRNPU, MTA2, PRPF3, PSMD3, RBBP4, SFPQ, SMARCA1, SMARCA2, TOP1, USP7, XRCC5, COPS3, COPS4, COPS6, DDX1, DDX41, GATAD2A, GATAD2B, PRPF4, PSMC5, SF3B2, CTR9, NONO, PSMD12 and TOP2A. In terms of processing, phosphorylated in a cell cycle-dependent manner at Ser-158 by cyclin A-CDK2 and at Ser-10 by ATM in response to DNA damage. Phosphorylation at these two sites promotes the intramolecular interaction of the N-terminal domain with the helicase ATP-binding domain, thereby probably releasing the inhibitory effect of the N-terminal domain on its ATPase activity. Phosphorylation is essential for its chromatin remodeling activity. Ubiquitinated at the C-terminus. Ubiquitination by the CSA complex leads to ERCC6 proteasomal degradation in a UV-dependent manner. Stabilized following interaction with KIAA1530/UVSSA, which promotes recruitment of deubiquitinating enzyme USP7, leading to deubiquitination of ERCC6 thereby preventing UV-induced degradation of ERCC6 by the proteasome. Post-translationally, sumoylation at Lys-205 in an UV-radiation-dependent manner is essential for its transcription-coupled nucleotide excision repair activity.

It localises to the nucleus. The protein resides in the chromosome. The enzyme catalyses ATP + H2O = ADP + phosphate + H(+). In terms of biological role, essential factor involved in transcription-coupled nucleotide excision repair (TC-NER), a process during which RNA polymerase II-blocking lesions are rapidly removed from the transcribed strand of active genes. Plays a central role in the initiation of the TC-NER process: specifically recognizes and binds RNA polymerase II stalled at a lesion, and mediates recruitment of ERCC8/CSA, initiating DNA damage excision by TFIIH recruitment. Upon DNA-binding, it locally modifies DNA conformation by wrapping the DNA around itself, thereby modifying the interface between stalled RNA polymerase II and DNA. Acts as a chromatin remodeler at DSBs; DNA-dependent ATPase-dependent activity is essential for this function. Plays an important role in regulating the choice of the DNA double-strand breaks (DSBs) repair pathway and G2/M checkpoint activation; DNA-dependent ATPase activity is essential for this function. Regulates the DNA repair pathway choice by inhibiting non-homologous end joining (NHEJ), thereby promoting the homologous recombination (HR)-mediated repair of DSBs during the S/G2 phases of the cell cycle. Mediates the activation of the ATM- and CHEK2-dependent DNA damage responses thus preventing premature entry of cells into mitosis following the induction of DNA DSBs. Remodels chromatin by evicting histones from chromatin flanking DSBs, limiting RIF1 accumulation at DSBs thereby promoting BRCA1-mediated HR. Required for stable recruitment of ELOA and CUL5 to DNA damage sites. Also involved in UV-induced translocation of ERCC8 to the nuclear matrix. Essential for neuronal differentiation and neuritogenesis; regulates transcription and chromatin remodeling activities required during neurogenesis. The sequence is that of DNA excision repair protein ERCC-6 from Homo sapiens (Human).